The sequence spans 35 residues: uncharacterized protein (35 aa).

This is an uncharacterized protein from Archaeoglobus fulgidus (strain ATCC 49558 / DSM 4304 / JCM 9628 / NBRC 100126 / VC-16).